We begin with the raw amino-acid sequence, 242 residues long: Octanoyltransferase (242 aa).

The region spanning 31–206 (SQTTDEIWFL…LFLKNFGYNQ (176 aa)) is the BPL/LPL catalytic domain. Substrate is bound by residues 70-77 (RGGQVTYH), 137-139 (SIG), and 150-152 (GLA). Catalysis depends on Cys168, which acts as the Acyl-thioester intermediate.

It belongs to the LipB family.

The protein localises to the cytoplasm. The catalysed reaction is octanoyl-[ACP] + L-lysyl-[protein] = N(6)-octanoyl-L-lysyl-[protein] + holo-[ACP] + H(+). Its pathway is protein modification; protein lipoylation via endogenous pathway; protein N(6)-(lipoyl)lysine from octanoyl-[acyl-carrier-protein]: step 1/2. In terms of biological role, catalyzes the transfer of endogenously produced octanoic acid from octanoyl-acyl-carrier-protein onto the lipoyl domains of lipoate-dependent enzymes. Lipoyl-ACP can also act as a substrate although octanoyl-ACP is likely to be the physiological substrate. The chain is Octanoyltransferase from Coxiella burnetii (strain CbuK_Q154) (Coxiella burnetii (strain Q154)).